The following is a 239-amino-acid chain: Uridylate kinase (239 aa).

13 to 16 is an ATP binding site; it reads KLSG. Gly55 serves as a coordination point for UMP. Gly56 and Arg60 together coordinate ATP. Residues Asp75 and 136 to 143 each bind UMP; that span reads TGNPFFTT. Residues Thr163, Asn164, Tyr169, and Asp172 each contribute to the ATP site.

The protein belongs to the UMP kinase family. In terms of assembly, homohexamer.

It is found in the cytoplasm. It carries out the reaction UMP + ATP = UDP + ADP. It functions in the pathway pyrimidine metabolism; CTP biosynthesis via de novo pathway; UDP from UMP (UMPK route): step 1/1. Its activity is regulated as follows. Inhibited by UTP. Catalyzes the reversible phosphorylation of UMP to UDP. The polypeptide is Uridylate kinase (Neisseria gonorrhoeae (strain ATCC 700825 / FA 1090)).